Here is a 142-residue protein sequence, read N- to C-terminus: Large ribosomal subunit protein uL16 (142 aa).

It belongs to the universal ribosomal protein uL16 family. As to quaternary structure, part of the 50S ribosomal subunit.

Functionally, binds 23S rRNA and is also seen to make contacts with the A and possibly P site tRNAs. This chain is Large ribosomal subunit protein uL16, found in Thermosipho africanus (strain TCF52B).